Here is a 128-residue protein sequence, read N- to C-terminus: NADH dehydrogenase [ubiquinone] 1 beta subcomplex subunit 6 (128 aa).

Ser2 is subject to N-acetylserine. Lys24 is subject to N6-acetyllysine. A helical membrane pass occupies residues 64–86 (TYRHSIFAFTHVLIPVWIIHYYL).

It belongs to the complex I NDUFB6 subunit family. Complex I is composed of 45 different subunits.

The protein localises to the mitochondrion inner membrane. Functionally, accessory subunit of the mitochondrial membrane respiratory chain NADH dehydrogenase (Complex I), that is believed not to be involved in catalysis. Complex I functions in the transfer of electrons from NADH to the respiratory chain. The immediate electron acceptor for the enzyme is believed to be ubiquinone. This chain is NADH dehydrogenase [ubiquinone] 1 beta subcomplex subunit 6 (NDUFB6), found in Bos taurus (Bovine).